The chain runs to 312 residues: Malate dehydrogenase 1 (312 aa).

NAD(+)-binding positions include 11 to 16 and Asp35; that span reads GAGQIG. 2 residues coordinate substrate: Arg86 and Arg92. NAD(+) is bound by residues Asn99 and 122–124; that span reads ITN. Substrate is bound by residues Asn124 and Arg155. The active-site Proton acceptor is the His179.

Belongs to the LDH/MDH superfamily. MDH type 3 family.

The catalysed reaction is (S)-malate + NAD(+) = oxaloacetate + NADH + H(+). Catalyzes the reversible oxidation of malate to oxaloacetate. The sequence is that of Malate dehydrogenase 1 from Anaeromyxobacter dehalogenans (strain 2CP-C).